The sequence spans 461 residues: Lysosomal dipeptide transporter MFSD1 (461 aa).

The segment covering 1–13 (MADREEHQGLLDG) has biased composition (basic and acidic residues). The tract at residues 1-22 (MADREEHQGLLDGDRDEDEGDK) is disordered. A Dileucine internalization motif motif is present at residues 10–11 (LL). 10 helical membrane passes run 37–57 (LLHRILVLIFMCFLGFGSYFC), 81–101 (QLYAWYSWPNVVLCFLGGFLL), 111–131 (TVIFSLFVLVGQIIFAAGALA), 134–154 (FWLMNVGRFVFGIGGESLAVA), 264–284 (LWLIFIICVAYYVAIFPFIGL), 302–322 (AINSVVYIISAPASPLLGFLV), 331–351 (WVMLAVITTLLSHMMLAFTFW), 359–379 (LLGVSYSLLACALWPMVAFVV), 390–410 (FMQSIQNLGLAVMSIAAGSIL), and 416–436 (LFLEVFFIACLCMALLAVVLL).

Belongs to the major facilitator superfamily. As to quaternary structure, homodimer. Interacts with lysosomal protein GLMP (via lumenal domain); the interaction starts while both proteins are still in the endoplasmic reticulum and is required for stabilization of MFSD1 in lysosomes but has no direct effect on its targeting to lysosomes or transporter activity.

The protein localises to the lysosome membrane. The enzyme catalyses L-alpha-aminoacyl-L-arginine(out) = L-alpha-aminoacyl-L-arginine(in). The catalysed reaction is L-arginyl-L-alpha-amino acid(out) = L-arginyl-L-alpha-amino acid(in). It carries out the reaction L-arginyl-glycine(out) = L-arginyl-glycine(in). It catalyses the reaction L-alpha-aminoacyl-L-lysine(out) = L-alpha-aminoacyl-L-lysine(in). The enzyme catalyses L-aspartyl-L-lysine(out) = L-aspartyl-L-lysine(in). The catalysed reaction is L-alanyl-L-lysine(out) = L-alanyl-L-lysine(in). It carries out the reaction L-lysyl-L-alpha-amino acid(out) = L-lysyl-L-alpha-amino acid(in). It catalyses the reaction L-lysyl-L-alanine(out) = L-lysyl-L-alanine(in). The enzyme catalyses L-lysyl-L-lysine(out) = L-lysyl-L-lysine(in). The catalysed reaction is L-lysyl-glycine(out) = L-lysyl-glycine(in). It carries out the reaction L-alpha-aminoacyl-L-histidine(out) = L-alpha-aminoacyl-L-histidine(in). It catalyses the reaction L-histidyl-L-alpha-amino acid(out) = L-histidyl-L-alpha-amino acid(in). The enzyme catalyses L-histidyl-glycine(out) = L-histidyl-glycine(in). Functionally, lysosomal dipeptide uniporter that selectively exports lysine, arginine or histidine-containing dipeptides with a net positive charge from the lysosome lumen into the cytosol. Could play a role in a specific type of protein O-glycosylation indirectly regulating macrophages migration and tissue invasion. Also essential for liver homeostasis. In Danio rerio (Zebrafish), this protein is Lysosomal dipeptide transporter MFSD1 (mfsd1).